The sequence spans 306 residues: Ribonuclease Z (306 aa).

7 residues coordinate Zn(2+): His-63, His-65, Asp-67, His-68, His-140, Asp-211, and His-269. The Proton acceptor role is filled by Asp-67.

The protein belongs to the RNase Z family. Homodimer. It depends on Zn(2+) as a cofactor.

It carries out the reaction Endonucleolytic cleavage of RNA, removing extra 3' nucleotides from tRNA precursor, generating 3' termini of tRNAs. A 3'-hydroxy group is left at the tRNA terminus and a 5'-phosphoryl group is left at the trailer molecule.. Functionally, zinc phosphodiesterase, which displays some tRNA 3'-processing endonuclease activity. Probably involved in tRNA maturation, by removing a 3'-trailer from precursor tRNA. The polypeptide is Ribonuclease Z (Listeria welshimeri serovar 6b (strain ATCC 35897 / DSM 20650 / CCUG 15529 / CIP 8149 / NCTC 11857 / SLCC 5334 / V8)).